An 88-amino-acid polypeptide reads, in one-letter code: Translation initiation factor IF-1 1 (88 aa).

The S1-like domain occupies 1-72 (MSKEDMIELE…TKGRINFRHP (72 aa)). Residues 66–88 (RINFRHPTANPGAGPRPSHHHRR) form a disordered region.

Belongs to the IF-1 family. In terms of assembly, component of the 30S ribosomal translation pre-initiation complex which assembles on the 30S ribosome in the order IF-2 and IF-3, IF-1 and N-formylmethionyl-tRNA(fMet); mRNA recruitment can occur at any time during PIC assembly.

Its subcellular location is the cytoplasm. In terms of biological role, one of the essential components for the initiation of protein synthesis. Stabilizes the binding of IF-2 and IF-3 on the 30S subunit to which N-formylmethionyl-tRNA(fMet) subsequently binds. Helps modulate mRNA selection, yielding the 30S pre-initiation complex (PIC). Upon addition of the 50S ribosomal subunit IF-1, IF-2 and IF-3 are released leaving the mature 70S translation initiation complex. In Chromobacterium violaceum (strain ATCC 12472 / DSM 30191 / JCM 1249 / CCUG 213 / NBRC 12614 / NCIMB 9131 / NCTC 9757 / MK), this protein is Translation initiation factor IF-1 1.